Consider the following 143-residue polypeptide: Mannitol-specific phosphotransferase enzyme IIA component (143 aa).

The 141-residue stretch at 2–142 (QVLAKENIKL…EDLIAIFNEV (141 aa)) folds into the PTS EIIA type-2 domain. H62 functions as the Tele-phosphohistidine intermediate in the catalytic mechanism. H62 carries the phosphohistidine; by HPr modification. Phosphoserine is present on S74.

The protein resides in the cytoplasm. The phosphoenolpyruvate-dependent sugar phosphotransferase system (sugar PTS), a major carbohydrate active transport system, catalyzes the phosphorylation of incoming sugar substrates concomitantly with their translocation across the cell membrane. The enzyme II CmtAB PTS system is involved in D-mannitol transport. This is Mannitol-specific phosphotransferase enzyme IIA component (mtlF) from Bacillus subtilis (strain 168).